The primary structure comprises 299 residues: 4-diphosphocytidyl-2-C-methyl-D-erythritol kinase (299 aa).

The active site involves Lys-11. Residue 94 to 104 (PQGGGLGGGSS) participates in ATP binding. The active site involves Asp-136.

This sequence belongs to the GHMP kinase family. IspE subfamily.

The enzyme catalyses 4-CDP-2-C-methyl-D-erythritol + ATP = 4-CDP-2-C-methyl-D-erythritol 2-phosphate + ADP + H(+). The protein operates within isoprenoid biosynthesis; isopentenyl diphosphate biosynthesis via DXP pathway; isopentenyl diphosphate from 1-deoxy-D-xylulose 5-phosphate: step 3/6. In terms of biological role, catalyzes the phosphorylation of the position 2 hydroxy group of 4-diphosphocytidyl-2C-methyl-D-erythritol. This is 4-diphosphocytidyl-2-C-methyl-D-erythritol kinase from Bordetella parapertussis (strain 12822 / ATCC BAA-587 / NCTC 13253).